Reading from the N-terminus, the 470-residue chain is Glutamyl-tRNA(Gln) amidotransferase subunit A (470 aa).

Active-site charge relay system residues include Lys-71 and Ser-146. The active-site Acyl-ester intermediate is the Ser-170.

This sequence belongs to the amidase family. GatA subfamily. In terms of assembly, heterotrimer of A, B and C subunits.

The catalysed reaction is L-glutamyl-tRNA(Gln) + L-glutamine + ATP + H2O = L-glutaminyl-tRNA(Gln) + L-glutamate + ADP + phosphate + H(+). Its function is as follows. Allows the formation of correctly charged Gln-tRNA(Gln) through the transamidation of misacylated Glu-tRNA(Gln) in organisms which lack glutaminyl-tRNA synthetase. The reaction takes place in the presence of glutamine and ATP through an activated gamma-phospho-Glu-tRNA(Gln). This chain is Glutamyl-tRNA(Gln) amidotransferase subunit A, found in Akkermansia muciniphila (strain ATCC BAA-835 / DSM 22959 / JCM 33894 / BCRC 81048 / CCUG 64013 / CIP 107961 / Muc).